A 263-amino-acid polypeptide reads, in one-letter code: 7beta-hydroxysteroid dehydrogenase (263 aa).

NADP(+) contacts are provided by residues 17 to 21 (TEGVG), 40 to 41 (RR), and 66 to 67 (DF). Catalysis depends on Y156, which acts as the Proton acceptor. Position 240 (S240) interacts with NADP(+).

Belongs to the short-chain dehydrogenases/reductases (SDR) family.

It catalyses the reaction a 7beta-hydroxysteroid + NADP(+) = a 7-oxosteroid + NADPH + H(+). The enzyme catalyses 7-oxolithocholate + NADPH + H(+) = ursodeoxycholate + NADP(+). 7beta-hydroxysteroid dehydrogenase that catalyzes the reduction of the 7-oxo group of 7-oxo-lithocholate (7-oxo-LCA), to yield ursodeoxycholate (UDCA). As R.gnavus is a common core bacterium of the human gut microbiota, this enzyme contributes to the formation of UDCA in the human colon. UDCA is regarded as a chemopreventive beneficial secondary bile acid due to its low hydrophobicity; it protects hepatocytes and bile duct epithelial cells against necrosis and apoptosis induced by more hydrophobic secondary bile acids like deoxycholate (DCA). This enzyme is also able to catalyze the reverse reaction in vitro, i.e. the oxidation of the 7beta-hydroxy group of UDCA to 7-oxo-LCA, but much less efficiently than the reduction reaction. This Mediterraneibacter gnavus (strain ATCC 29149 / DSM 114966 / JCM 6515 / VPI C7-9) (Ruminococcus gnavus) protein is 7beta-hydroxysteroid dehydrogenase.